The sequence spans 147 residues: MVHLTPEEKNAVTTLWGKVNVDEVGGEALGRLLVVYPWTQRFFESFGDLSSPDAVMGNPKVKAHGKKVLGAFSDGLNHLDNLKGTFAQLSELHCDKLHVDPENFKLLGNVLVCVLAHHFGKEFTPQVQAAYQKVVAGVANALAHKYH.

At valine 2 the chain carries N-acetylvaline. The 145-residue stretch at 3-147 (HLTPEEKNAV…VANALAHKYH (145 aa)) folds into the Globin domain. Position 13 is a phosphothreonine (threonine 13). The residue at position 45 (serine 45) is a Phosphoserine. Position 60 is an N6-acetyllysine (lysine 60). Position 64 (histidine 64) interacts with heme b. Lysine 83 carries the N6-acetyllysine modification. Residue histidine 93 participates in heme b binding. An S-nitrosocysteine modification is found at cysteine 94. Lysine 145 is subject to N6-acetyllysine.

This sequence belongs to the globin family. Heterotetramer of two alpha chains and two beta chains. As to expression, red blood cells.

In terms of biological role, involved in oxygen transport from the lung to the various peripheral tissues. The polypeptide is Hemoglobin subunit beta (HBB) (Macaca fascicularis (Crab-eating macaque)).